Consider the following 303-residue polypeptide: Major fimbrium anchoring subunit FimB (303 aa).

Positions 1-22 (MNDAKKYIVSVLILLVAGMFGG) are cleaved as a signal peptide. Cysteine 23 carries N-palmitoyl cysteine lipidation. Cysteine 23 carries S-diacylglycerol cysteine lipidation.

Belongs to the bacteroidetes fimbrillin superfamily. FimB/Mfa2 family. FimB is not part of the fimbrium itself, but anchors the fimbrium in the outer membrane. Linear, head-to-tail oligomerization of fimbrial subunits mediates assembly of the fimbrium stalk, while the minor components FimC, FimD and FimE probably form the fimbrium tip. The anchoring subunit FimB limits fimbrium length and is important for solid fimbrium attachment to the outer membrane. In its absence, the major fimbriae become very long and are easily detached from the membrane.

It localises to the cell outer membrane. Functionally, anchoring subunit of the major fimbriae. Regulates fimbrial length. These filamentous pili are attached to the cell surface; they mediate biofilm formation, adhesion onto host cells and onto other bacteria that are part of the oral microbiome. Fimbriae of P.gingivalis are major virulence factors. This chain is Major fimbrium anchoring subunit FimB, found in Porphyromonas gingivalis (strain ATCC BAA-308 / W83).